We begin with the raw amino-acid sequence, 386 residues long: Heavy metal-associated isoprenylated plant protein 5 (386 aa).

Positions methionine 1–proline 16 are enriched in basic and acidic residues. A disordered region spans residues methionine 1–alanine 40. The HMA 1 domain occupies valine 49–valine 112. A metal cation contacts are provided by cysteine 60 and cysteine 63. Positions valine 129–glutamate 153 are disordered. Positions glycine 130–alanine 141 are enriched in basic and acidic residues. The 68-residue stretch at glutamate 153 to valine 220 folds into the HMA 2 domain. Cysteine 164 and cysteine 167 together coordinate a metal cation. Basic and acidic residues-rich tracts occupy residues lysine 223–alanine 245 and glutamate 252–glycine 297. The segment at lysine 223 to proline 301 is disordered. Cysteine 383 is subject to Cysteine methyl ester. The S-farnesyl cysteine moiety is linked to residue cysteine 383. Positions serine 384 to methionine 386 are cleaved as a propeptide — removed in mature form.

This sequence belongs to the HIPP family. Post-translationally, efficiently farnesylated in vitro.

Functionally, heavy-metal-binding protein. Involved in disease resistance. This is Heavy metal-associated isoprenylated plant protein 5 from Arabidopsis thaliana (Mouse-ear cress).